Reading from the N-terminus, the 1254-residue chain is MFPFQPMYPMQPMPYRNPFAAPRRPWFPRTDPFLAMQVQELTRSMANLTFKQRRDAPPEGPSAKKPKKEASQKQKGGGQGKKKKNQGKKKAKTGPPNPKAQNGNKKKTNKKPGKRQRMVMKLESDKTFPIMLEGKINGYACVVGGKLFRPMHVEGKIDNDVLAALKTKKASKYDLEYADVPQNMRADTFKYTHEKPQGYYSWHHGAVQYENGRFTVPKGVGAKGDSGRPILDNQGRVVAIVLGGVNEGSRTALSVVMWNEKGVTVKYTPENCEQWSLVTTMCLLANVTFPCAQPPICYDRKPAETLAMLSVNVDNPGYDELLEAAVKCPGRKRRSTEELFKEYKLTRPYMARCIRCAVGSCHSPIAIEAVKSDGHDGYVRLQTSSQYGLDSSGNLKGRTMRYDMHGTIKEIPLHQVSLHTSRPCHIVDGHGYFLLARCPAGDSITMEFKKDSVTHSCSVPYEVKFNPVGRELYTHPPEHGVEQACQVYAHDAQNRGAYVEMHLPGSEVDSSLVSLSGSSVTVTPPVGTSALVECECGGTKISETINKTKQFSQCTKKEQCRAYRLQNDKWVYNSDKLPKAAGATLKGKLHVPFLLADGKCTVPLAPEPMITFGFRSVSLKLHPKNPTYLTTRQLADEPHYTHELISEPAVRNFTVTEKGWEFVWGNHPPKRFWAQETAPGNPHGLPHEVITHYYHRYPMSTILGLSICAAIATVSVAASTWLFCRSRVACLTPYRLTPNARIPFCLAVLCCARTARAETTWESLDHLWNNNQQMFWIQLLIPLAALIVVTRLLRCVCCVVPFLVMAGAAAGAYEHATTMPSQAGISYNTIVNRAGYAPLPISITPTKIKLIPTVNLEYVTCHYKTGMDSPAIKCCGSQECTPTYRPDEQCKVFTGVYPFMWGGAYCFCDTENTQVSKAYVMKSDDCLADHAEAYKAHTASVQAFLNITVGEHSIVTTVYVNGETPVNFNGVKLTAGPLSTAWTPFDRKIVQYAGEIYNYDFPEYGAGQPGAFGDIQSRTVSSSDLYANTNLVLQRPKAGAIHVPYTQAPSGFEQWKKDKAPSLKFTAPFGCEIYTNPIRAENCAVGSIPLAFDIPDALFTRVSETPTLSAAECTLNECVYSSDFGGIATVKYSASKSGKCAVHVPSGTATLKEAAVELTEQGSATIHFSTANIHPEFRLQICTSYVTCKGDCHPPKDHIVTHPQYHAQTFTAAVSKTAWTWLTSLLGGSAVIIIIGLVLATIVAMYVLTNQKHN.

The necessary for nucleocapsid assembly and virus assembly stretch occupies residues 1 to 33 (MFPFQPMYPMQPMPYRNPFAAPRRPWFPRTDPF). The host transcription inhibition stretch occupies residues 33 to 68 (FLAMQVQELTRSMANLTFKQRRDAPPEGPSAKKPKK). The Supraphysiological nuclear export signal signature appears at 41–48 (LTRSMANL). The segment at 45 to 119 (MANLTFKQRR…KKPGKRQRMV (75 aa)) is disordered. The short motif at 64–68 (KKPKK) is the Nuclear localization signal element. A compositionally biased stretch (basic residues) spans 80-92 (GKKKKNQGKKKAK). The interval 91–127 (AKTGPPNPKAQNGNKKKTNKKPGKRQRMVMKLESDKT) is binding to the viral RNA. A phosphothreonine mark is found at T93 and T108. The span at 104 to 118 (NKKKTNKKPGKRQRM) shows a compositional bias: basic residues. The ribosome-binding stretch occupies residues 112–126 (PGKRQRMVMKLESDK). At S124 the chain carries Phosphoserine. A Peptidase S3 domain is found at 126–275 (KTFPIMLEGK…KYTPENCEQW (150 aa)). A Phosphothreonine modification is found at T127. Active-site charge relay system residues include H152, D174, and S226. Residues 276 to 287 (SLVTTMCLLANV) form a functions as an uncleaved signal peptide for the precursor of protein E3/E2 region. Topologically, residues 276–701 (SLVTTMCLLA…HYYHRYPMST (426 aa)) are extracellular. N286, N546, and N652 each carry an N-linked (GlcNAc...) asparagine; by host glycan. The helical transmembrane segment at 702-722 (ILGLSICAAIATVSVAASTWL) threads the bilayer. Over 723 to 757 (FCRSRVACLTPYRLTPNARIPFCLAVLCCARTARA) the chain is Cytoplasmic. S-palmitoyl cysteine; by host attachment occurs at residues C730, C750, and C751. The interval 730–750 (CLTPYRLTPNARIPFCLAVLC) is transient transmembrane before p62-6K protein processing. Residues 758–772 (ETTWESLDHLWNNNQ) lie on the Extracellular side of the membrane. The helical transmembrane segment at 773–793 (QMFWIQLLIPLAALIVVTRLL) threads the bilayer. Residues 794–795 (RC) are Cytoplasmic-facing. A helical membrane pass occupies residues 796–816 (VCCVVPFLVMAGAAAGAYEHA). Residues 817-1224 (TTMPSQAGIS…SKTAWTWLTS (408 aa)) lie on the Extracellular side of the membrane. 4 disulfide bridges follow: C861–C926, C874–C906, C875–C908, and C880–C890. The interval 896–913 (VYPFMWGGAYCFCDTENT) is E1 fusion peptide loop. N946 carries N-linked (GlcNAc...) asparagine; by host glycosylation. Disulfide bonds link C1071-C1083, C1113-C1188, C1118-C1192, and C1140-C1182. A helical membrane pass occupies residues 1225–1245 (LLGGSAVIIIIGLVLATIVAM). Over 1246 to 1254 (YVLTNQKHN) the chain is Cytoplasmic.

Homodimer. Homomultimer. Interacts with host karyopherin KPNA4; this interaction allows the nuclear import of the viral capsid protein. Interacts with spike glycoprotein E2. Interacts with host IRAK1; the interaction leads to inhibition of IRAK1-dependent signaling. Part of a tetrameric complex composed of host CRM1, host importin alpha/beta dimer and the viral capsid; this complex blocks the receptor-mediated transport through the nuclear pore. Interacts with host phosphatase PPP1CA; this interaction dephosphorylates the capsid protein, which increases its ability to bind to the viral genome. As to quaternary structure, the precursor of protein E3/E2 and E1 form a heterodimer shortly after synthesis. In terms of assembly, interacts with spike glycoprotein E2. The precursor of protein E3/E2 and E1 form a heterodimer shortly after synthesis. Processing of the precursor of protein E3/E2 into E2 and E3 results in a heterodimer of the spike glycoproteins E2 and E1. Spike at virion surface are constituted of three E2-E1 heterodimers. After target cell attachment and endocytosis, E1 change conformation to form homotrimers. Interacts with 6K protein. Interacts with host LDLRAD3; this interaction mediates viral entry to the host cell. Interacts with spike glycoprotein E1. Processing of the precursor of protein E3/E2 into E2 and E3 results in a heterodimer of the spike glycoproteins E2 and E1. Spike at virion surface are constituted of a trimer of E2-E1 heterodimers. Interacts with 6K protein. Interacts with host LDLRAD3; this interaction mediates viral entry to the host cell. As to quaternary structure, oligomer. Interacts with spike glycoprotein E1. Interacts with spike glycoprotein E2. In terms of processing, structural polyprotein: Specific enzymatic cleavages in vivo yield mature proteins. Capsid protein is auto-cleaved during polyprotein translation, unmasking a signal peptide at the N-terminus of the precursor of E3/E2. The remaining polyprotein is then targeted to the host endoplasmic reticulum, where host signal peptidase cleaves it into pE2, 6K and E1 proteins. pE2 is further processed to mature E3 and E2 by host furin in trans-Golgi vesicle. Palmitoylated via thioester bonds. These palmitoylations may induce disruption of the C-terminus transmembrane. This would result in the reorientation of E2 C-terminus from lumenal to cytoplasmic side. Post-translationally, phosphorylated on serine and threonine residues. In terms of processing, N-glycosylated. Palmitoylated via thioester bonds.

The protein localises to the virion. It localises to the host cytoplasm. The protein resides in the host cell membrane. Its subcellular location is the host nucleus. It is found in the virion membrane. It catalyses the reaction Autocatalytic release of the core protein from the N-terminus of the togavirus structural polyprotein by hydrolysis of a -Trp-|-Ser- bond.. In terms of biological role, forms an icosahedral capsid with a T=4 symmetry composed of 240 copies of the capsid protein surrounded by a lipid membrane through which penetrate 80 spikes composed of trimers of E1-E2 heterodimers. The capsid protein binds to the viral RNA genome at a site adjacent to a ribosome binding site for viral genome translation following genome release. Possesses a protease activity that results in its autocatalytic cleavage from the nascent structural protein. Following its self-cleavage, the capsid protein transiently associates with ribosomes, and within several minutes the protein binds to viral RNA and rapidly assembles into icosahedric core particles. The resulting nucleocapsid eventually associates with the cytoplasmic domain of the spike glycoprotein E2 at the cell membrane, leading to budding and formation of mature virions. In case of infection, new virions attach to target cells and after clathrin-mediated endocytosis their membrane fuses with the host endosomal membrane. This leads to the release of the nucleocapsid into the cytoplasm, followed by an uncoating event necessary for the genomic RNA to become accessible. The uncoating might be triggered by the interaction of capsid proteins with ribosomes. Binding of ribosomes would release the genomic RNA since the same region is genomic RNA-binding and ribosome-binding. Specifically inhibits interleukin-1 receptor-associated kinase 1/IRAK1-dependent signaling during viral entry, representing a means by which the alphaviruses may evade innate immune detection and activation prior to viral gene expression. Inhibits host transcription. Forms a tetrameric complex with XPO1/CRM1 and the nuclear import receptor importin. This complex blocks the central channel of host nuclear pores thereby inhibiting the receptor-mediated nuclear transport and thus the host mRNA and rRNA transcription. The inhibition of transcription is linked to a cytopathic effect on the host cell. Provides the signal sequence for the translocation of the precursor of protein E3/E2 to the host endoplasmic reticulum. Furin-cleaved E3 remains associated with spike glycoprotein E1 and mediates pH protection of the latter during the transport via the secretory pathway. After virion release from the host cell, the assembly protein E3 is gradually released in the extracellular space. Its function is as follows. Plays a role in viral attachment to target host cell, by binding to the cell receptor LDLRAD3. Synthesized as a p62 precursor which is processed by furin at the cell membrane just before virion budding, giving rise to E2-E1 heterodimer. The p62-E1 heterodimer is stable, whereas E2-E1 is unstable and dissociate at low pH. p62 is processed at the last step, presumably to avoid E1 fusion activation before its final export to cell surface. E2 C-terminus contains a transitory transmembrane that would be disrupted by palmitoylation, resulting in reorientation of the C-terminal tail from lumenal to cytoplasmic side. This step is critical since E2 C-terminus is involved in budding by interacting with capsid proteins. This release of E2 C-terminus in cytoplasm occurs lately in protein export, and precludes premature assembly of particles at the endoplasmic reticulum membrane. Functionally, acts as a viroporin that participates in virus glycoprotein processing and transport to the plasma membrane, cell permeabilization and budding of viral particles. Disrupts the calcium homeostasis of the cell, probably at the endoplasmic reticulum level. This leads to cytoplasmic calcium elevation. Because of its lipophilic properties, the 6K protein is postulated to influence the selection of lipids that interact with the transmembrane domains of the glycoproteins, which, in turn, affects the deformability of the bilayer required for the extreme curvature that occurs as budding proceeds. Present in low amount in virions, about 3% compared to viral glycoproteins. In terms of biological role, class II viral fusion protein. Fusion activity is inactive as long as E1 is bound to E2 in mature virion. After virus attachment to cell receptor LDLRAD3 and endocytosis, acidification of the endosome would induce dissociation of E1/E2 heterodimer and concomitant trimerization of the E1 subunits. This E1 trimer is fusion active, and promotes release of viral nucleocapsid in cytoplasm after endosome and viral membrane fusion. Efficient fusion requires the presence of cholesterol and sphingolipid in the target membrane. Fusion is optimal at levels of about 1 molecule of cholesterol per 2 molecules of phospholipids, and is specific for sterols containing a 3-beta-hydroxyl group. The polypeptide is Structural polyprotein (Bos taurus (Bovine)).